Reading from the N-terminus, the 762-residue chain is Polyribonucleotide nucleotidyltransferase (762 aa).

Asp531 and Asp537 together coordinate Mg(2+). In terms of domain architecture, KH spans 597–656 (PRVTTIKVPVDKIGEVIGPKGKVINSITEETGAQISIEDDGTVFVGATDGPSAQAAIDKI). Positions 668–737 (GERFLGTVVK…KRGKISLVLV (70 aa)) constitute an S1 motif domain.

This sequence belongs to the polyribonucleotide nucleotidyltransferase family. Mg(2+) is required as a cofactor.

The protein localises to the cytoplasm. The catalysed reaction is RNA(n+1) + phosphate = RNA(n) + a ribonucleoside 5'-diphosphate. In terms of biological role, involved in mRNA degradation. Catalyzes the phosphorolysis of single-stranded polyribonucleotides processively in the 3'- to 5'-direction. The protein is Polyribonucleotide nucleotidyltransferase of Mycobacterium marinum (strain ATCC BAA-535 / M).